Reading from the N-terminus, the 687-residue chain is Probable WRKY transcription factor 2 (687 aa).

The segment at 197–276 (YGNYNNRSSS…AGGAPAEDGY (80 aa)) is disordered. Composition is skewed to polar residues over residues 199 to 208 (NYNNRSSSHQ) and 219 to 249 (NIES…TSLE). The WRKY 1 DNA-binding region spans 267 to 331 (AGGAPAEDGY…YKGAHNHLKP (65 aa)). Zn(2+) is bound by residues cysteine 298, cysteine 303, histidine 326, and histidine 328. 2 disordered regions span residues 324–384 (GAHN…STRF) and 416–453 (FSND…ESKR). Residues 354-379 (RDSAATWVSCNNTQQQGGSNENNVEE) are compositionally biased toward polar residues. Gly residues predominate over residues 435–444 (YDGGGGGGGG). A DNA-binding region (WRKY 2) is located at residues 481–546 (SDVDILDDGY…YEGKHNHDVP (66 aa)). Zn(2+) is bound by residues cysteine 512, cysteine 517, histidine 541, and histidine 543. Positions 537-599 (YEGKHNHDVP…QVTTNNQSPF (63 aa)) are disordered. The span at 553-565 (HGGGGDSGNGNSG) shows a compositional bias: gly residues. Over residues 578 to 589 (HHSEPPRGRFDR) the composition is skewed to basic and acidic residues. Polar residues predominate over residues 590 to 599 (QVTTNNQSPF).

The protein belongs to the WRKY group I family. In terms of tissue distribution, low expression in senescent leaves. Expressed in both the unfertilized egg cell and the pollen tube.

The protein resides in the nucleus. Functionally, transcription factor. Regulates WOX8 and WOX9 expression and basal cell division patterns during early embryogenesis. Interacts specifically with the W box (5'-(T)TGAC[CT]-3'), a frequently occurring elicitor-responsive cis-acting element. Required to repolarize the zygote from a transient symmetric state. The polypeptide is Probable WRKY transcription factor 2 (Arabidopsis thaliana (Mouse-ear cress)).